The sequence spans 512 residues: D-alanine--D-alanyl carrier protein ligase (512 aa).

An ATP-binding site is contributed by T152 to S153. D199 contacts D-alanine. N294–T299 lines the ATP pocket. D-alanine is bound at residue V303. ATP is bound by residues D385, Y397–R400, and K499. Residue K499 coordinates D-alanine.

The protein belongs to the ATP-dependent AMP-binding enzyme family. DltA subfamily.

It localises to the cytoplasm. It carries out the reaction holo-[D-alanyl-carrier protein] + D-alanine + ATP = D-alanyl-[D-alanyl-carrier protein] + AMP + diphosphate. It functions in the pathway cell wall biogenesis; lipoteichoic acid biosynthesis. Functionally, catalyzes the first step in the D-alanylation of lipoteichoic acid (LTA), the activation of D-alanine and its transfer onto the D-alanyl carrier protein (Dcp) DltC. In an ATP-dependent two-step reaction, forms a high energy D-alanyl-AMP intermediate, followed by transfer of the D-alanyl residue as a thiol ester to the phosphopantheinyl prosthetic group of the Dcp. D-alanylation of LTA plays an important role in modulating the properties of the cell wall in Gram-positive bacteria, influencing the net charge of the cell wall. The chain is D-alanine--D-alanyl carrier protein ligase from Streptococcus pyogenes serotype M18 (strain MGAS8232).